The sequence spans 479 residues: Flotillin-like protein 3 (479 aa).

Residue C36 is the site of S-palmitoyl cysteine attachment. 2 coiled-coil regions span residues 227 to 251 (KVKTEVKVFQNEKEALVAKADAALA) and 306 to 326 (EYETKVQEANWELYNKQKQAE).

The protein belongs to the band 7/mec-2 family. Flotillin subfamily. In terms of processing, may be palmitoylated.

The protein resides in the cell membrane. It localises to the membrane. The protein localises to the caveola. Its function is as follows. May act as a scaffolding protein within caveolar membranes, functionally participating in formation of caveolae or caveolae-like vesicles. In Arabidopsis thaliana (Mouse-ear cress), this protein is Flotillin-like protein 3 (FLOT3).